Here is a 952-residue protein sequence, read N- to C-terminus: Aminopeptidase 2, mitochondrial (952 aa).

The transit peptide at 1–52 (MPIVRWLLLKSAVRGSSLIGKAHPCLRSIAAHPRYLSNVYSPPAGVSRSLRI) directs the protein to the mitochondrion. Residues glutamate 228 and 360-364 (GAMEN) each bind substrate. A glycan (N-linked (GlcNAc...) asparagine) is linked at asparagine 381. Residue histidine 396 coordinates Zn(2+). Glutamate 397 acts as the Proton acceptor in catalysis. Residues histidine 400 and glutamate 419 each contribute to the Zn(2+) site. Asparagine 713 carries an N-linked (GlcNAc...) asparagine glycan.

The protein belongs to the peptidase M1 family. Zn(2+) is required as a cofactor.

The protein localises to the periplasm. Its subcellular location is the cytoplasm. It localises to the mitochondrion. Functionally, involved in the cellular supply of leucine from externally offered leucine-containing dipeptide substrates. The protein is Aminopeptidase 2, mitochondrial (APE2) of Saccharomyces cerevisiae (strain ATCC 204508 / S288c) (Baker's yeast).